A 444-amino-acid chain; its full sequence is Protein giant-lens (444 aa).

The N-terminal stretch at 1-24 is a signal peptide; it reads MPTTLMLLPCMLLLLLTAAAVAVG. 2 Two-fingered domain 1 part repeats span residues 123–165 and 285–307; these read RDVR…CRCP and CPSS…YKMC. 8 cysteine pairs are disulfide-bonded: Cys141–Cys162, Cys147–Cys285, Cys164–Cys307, Cys316–Cys341, Cys343–Cys370, Cys378–Cys405, Cys384–Cys413, and Cys407–Cys440. 2 Two-fingered domain repeats span residues 316 to 370 and 378 to 444; these read CTHF…LFAC and CQRK…MAND. Asn333 is a glycosylation site (N-linked (GlcNAc...) asparagine).

Interacts with spi. In terms of tissue distribution, during embryogenesis, expression is in a segmental pattern in the ectoderm and in the nervous system. In the eye imaginal disks, expression in photoreceptor cells begins a few rows posterior to the morphogenetic furrow. Also expressed in the wing disk. In the adult, expression is seen in the retina and lamina.

It localises to the secreted. Regulates cell determination; development of ommatidia and optic lobe. Is a signaling molecule involved in the process of axon pathfinding in the eye. Part of the Ras pathway regulating programmed cell death in pupal eyes; activated by lozenge (lz). Antagonist for the Egfr receptor (gurken). Inhibits Egfr signaling without interacting directly with the receptor, but instead by sequestering the Egfr-activating ligand spitz (spi). The polypeptide is Protein giant-lens (aos) (Drosophila melanogaster (Fruit fly)).